The sequence spans 773 residues: Immunoglobulin domain and leucine-rich repeat-containing protein 2 (773 aa).

The first 20 residues, 1 to 20 (MRKFVFFVVAILIQIHTTTS), serve as a signal peptide directing secretion. The Extracellular segment spans residues 21–493 (QRNRSSSPSG…DWYSYDVFNS (473 aa)). LRR repeat units lie at residues 52-73 (TRNIQCFSIDESKLLEIQKIYG), 74-96 (SNIQRLELHNWQHDQLNFDIFAP), 97-120 (FPQLEHIILRDGDLESLNGTVIHP), 122-144 (LKVLSIENSELTSSSEVCRLLSI), 145-167 (FPKIQSLSLSKNYFEKFECDTSN), and 168-191 (TKLKILDLSQNRISHLEVPNTLRV). Asn114 carries N-linked (GlcNAc...) asparagine glycosylation. An N-linked (GlcNAc...) asparagine glycan is attached at Asn204. 4 LRR repeats span residues 206-230 (STKLTDLDISFNKLSLWPSFDDWKF), 233-251 (LRSLSAIKLDLQTGFQLDA), 252-275 (PLLNSLNIDGASLRYLNFHQILTP), and 296-319 (PSTVTDVAFTDTMLRTLPADFIPM). The 131-residue stretch at 349 to 479 (PVYAQTSIRK…GKDYGIYHFR (131 aa)) folds into the Ig-like domain. Asn361 and Asn379 each carry an N-linked (GlcNAc...) asparagine glycan. Residues Cys396 and Cys463 are joined by a disulfide bond. Residues 494-514 (VFWGGLATSLIVCLISFLLNI) form a helical membrane-spanning segment. Over 515–773 (TWILTRKSAL…RSPDSPPEKR (259 aa)) the chain is Cytoplasmic. Residues 725-773 (VRPGIIPTNAPSIRFTTKPTTSSISNEASTSSPSSSGAHRSPDSPPEKR) form a disordered region. Residues 733–745 (NAPSIRFTTKPTT) show a composition bias toward polar residues. Residues 746–763 (SSISNEASTSSPSSSGAH) show a composition bias toward low complexity. The span at 764–773 (RSPDSPPEKR) shows a compositional bias: basic and acidic residues.

It localises to the membrane. The polypeptide is Immunoglobulin domain and leucine-rich repeat-containing protein 2 (Caenorhabditis elegans).